The primary structure comprises 352 residues: Selenide, water dikinase (352 aa).

The active site involves Cys-23. Residues Lys-26 and Ser-54–Asp-56 each bind ATP. Position 57 (Asp-57) interacts with Mg(2+). Residues Asp-74, Asp-97, and Gly-145–Ser-147 each bind ATP. Asp-97 is a Mg(2+) binding site. Position 233 (Asp-233) interacts with Mg(2+).

Belongs to the selenophosphate synthase 1 family. Class I subfamily. In terms of assembly, homodimer. It depends on Mg(2+) as a cofactor.

The catalysed reaction is hydrogenselenide + ATP + H2O = selenophosphate + AMP + phosphate + 2 H(+). Functionally, synthesizes selenophosphate from selenide and ATP. The sequence is that of Selenide, water dikinase from Shewanella baltica (strain OS185).